The sequence spans 174 residues: MIRALYIGRFQPYHNGHHYVINQIAQEADELIIGIGSAQMSHEPADPFTAGERVLMITGALQDLHKPLYVIPLEDINRNVLWVSHVRAMTPPFHRIYSGNPLVIRLFHEAGIEVLSPAMYERATLSGTKIRDLIACDKPWEDFVPPAVVRVIQEIDGISRIRALNQDDGDCPGR.

It belongs to the archaeal NMN adenylyltransferase family.

It is found in the cytoplasm. The enzyme catalyses beta-nicotinamide D-ribonucleotide + ATP + H(+) = diphosphate + NAD(+). It participates in cofactor biosynthesis; NAD(+) biosynthesis; NAD(+) from nicotinamide D-ribonucleotide: step 1/1. The sequence is that of Nicotinamide-nucleotide adenylyltransferase from Methanospirillum hungatei JF-1 (strain ATCC 27890 / DSM 864 / NBRC 100397 / JF-1).